Consider the following 223-residue polypeptide: Rab-like protein 2A (223 aa).

Residues 28 to 35 (GDSAVGKS), 76 to 80 (DTAGQ), and 133 to 136 (NKID) each bind GTP. A disordered region spans residues 200–223 (KLEQKEEDTSGQEQSDTTKSPSPS). Over residues 210-223 (GQEQSDTTKSPSPS) the composition is skewed to polar residues.

The protein belongs to the small GTPase superfamily. Rab family. In terms of assembly, interacts with IFT27, IFT81, IFT172, ATP6V1E1, HK1, LDHC, MAPRE1 and HSPA2. In terms of tissue distribution, isoform 2 is expressed in the testis and localizes to the mid-piece of the sperm tail (at protein level). Isoform 2 is expressed at higher levels in testis than isoform 1. Isoform 1 and isoform 2 are widely expressed and notably within other tissues containing motile cilia including the lung, trachea, brain, ovary and kidney.

In terms of biological role, plays an essential role in male fertility, sperm intra-flagellar transport, and tail assembly. Binds, in a GTP-regulated manner, to a specific set of effector proteins including key proteins involved in cilia development and function and delivers them into the growing sperm tail. This is Rab-like protein 2A (Rabl2) from Mus musculus (Mouse).